The following is a 56-amino-acid chain: Large ribosomal subunit protein bL33 (56 aa).

This sequence belongs to the bacterial ribosomal protein bL33 family.

The chain is Large ribosomal subunit protein bL33 from Marinomonas sp. (strain MWYL1).